Reading from the N-terminus, the 224-residue chain is UPF0758 protein Tola_0183 (224 aa).

The 123-residue stretch at 102-224 (SLTSPQLVRR…PVSFAERGWL (123 aa)) folds into the MPN domain. Zn(2+) contacts are provided by His-173, His-175, and Asp-186. The JAMM motif signature appears at 173 to 186 (HNHPSGVAEPSHAD).

The protein belongs to the UPF0758 family.

The protein is UPF0758 protein Tola_0183 of Tolumonas auensis (strain DSM 9187 / NBRC 110442 / TA 4).